A 764-amino-acid polypeptide reads, in one-letter code: Complement factor B (764 aa).

Positions 1–25 are cleaved as a signal peptide; the sequence is MGSNLSPQLCLMPFILGLLSGGVTT. Sushi domains follow at residues 35–100, 101–160, and 163–220; these read GSCS…ECRA, IHCP…ICDN, and GYCS…SCQD. 6 disulfide bridges follow: Cys-37/Cys-76, Cys-62/Cys-98, Cys-103/Cys-145, Cys-131/Cys-158, Cys-165/Cys-205, and Cys-191/Cys-218. N-linked (GlcNAc...) asparagine glycosylation is found at Asn-122 and Asn-142. Residues 270 to 469 form the VWFA domain; sequence NIYLVLDGSD…NLEDVFYQMI (200 aa). Positions 278 and 280 each coordinate Mg(2+). Positions 278 and 280 each coordinate Mn(2+). N-linked (GlcNAc...) asparagine glycosylation is present at Asn-285. The N-linked (Glc) (glycation) lysine glycan is linked to Lys-291. Thr-353 serves as a coordination point for Mg(2+). Thr-353 lines the Mn(2+) pocket. N-linked (GlcNAc...) asparagine glycosylation is present at Asn-378. The Peptidase S1 domain maps to 477–757; sequence LCGMVWEHRK…VLPWLKEKLQ (281 aa). Disulfide bonds link Cys-478–Cys-596, Cys-511–Cys-527, Cys-599–Cys-615, Cys-656–Cys-682, and Cys-695–Cys-725. Residues His-526 and Asp-576 each act as charge relay system in the active site. Ser-699 (charge relay system) is an active-site residue.

This sequence belongs to the peptidase S1 family. As to quaternary structure, monomer. Interacts with complement C3b; this interaction is dependent on the presence of Mg(2+). Catalytic component of the C3 convertase of the alternative complement pathway, also named C3bBb, composed of complement factor B Bb and complement C3b. Catalytic component of the C5 convertase of the alternative complement pathway, also named C3bBb3b, composed of complement factor B Bb and additional molecules of complement C3b. Interacts to CFP; this interaction contributes to the stabilization of the active C3-convertase enzyme complex. The cofactor is Mg(2+). It depends on Mn(2+) as a cofactor. Post-translationally, cleaved by CFD following activation of the alternative complement system, generating Ba and Bb chains. Cleavage and activation takes place when CFB is already associated with complement C3b.

The protein localises to the secreted. The protein resides in the cell surface. The catalysed reaction is Cleavage of Arg-|-Ser bond in complement component C3 alpha-chain to yield C3a and C3b, and Arg-|-Xaa bond in complement component C5 alpha-chain to yield C5a and C5b.. In terms of biological role, precursor of the catalytic component of the C3 and C5 convertase complexes of the alternative pathway of the complement system, a cascade of proteins that leads to phagocytosis and breakdown of pathogens and signaling that strengthens the adaptive immune system. The alternative complement pathway acts as an amplification loop that enhances other complement pathways (classical, lectin and GZMK) by promoting formation of additional C3 and C5 convertases. CFB is cleaved and activated by CFD to generate Ba and Bb chains; Bb chain constituting the catalytic component of the C3 and C5 convertases. Functionally, serine protease component of the complement C3 and C5 convertase complexes of the alternative complement pathway. Following cleavage and activation by factor D (CFD), forms the C3 convertase together with complement C3b. As part of the C3 convertase, cleaves and activates C3 into C3a anaphylatoxin and C3b opsonin, the next components of the complement pathways. When an additional complement C3b molecule binds to the C3 convertase, forms the C5 convertase, which cleaves and activates C5 into C5a anaphylatoxin and C5b component of the membrane attack complex. Its function is as follows. Involved in proliferation and differentiation of preactivated B-lymphocytes, rapid spreading of peripheral blood monocytes, stimulation of lymphocyte blastogenesis and lysis of erythrocytes. This chain is Complement factor B, found in Homo sapiens (Human).